The sequence spans 134 residues: Ribosome-binding factor A (134 aa).

It belongs to the RbfA family. As to quaternary structure, monomer. Binds 30S ribosomal subunits, but not 50S ribosomal subunits or 70S ribosomes.

It localises to the cytoplasm. Its function is as follows. One of several proteins that assist in the late maturation steps of the functional core of the 30S ribosomal subunit. Associates with free 30S ribosomal subunits (but not with 30S subunits that are part of 70S ribosomes or polysomes). Required for efficient processing of 16S rRNA. May interact with the 5'-terminal helix region of 16S rRNA. In Rhizobium etli (strain CIAT 652), this protein is Ribosome-binding factor A.